The chain runs to 239 residues: Peptidyl-tRNA hydrolase (239 aa).

Residue Tyr-14 coordinates tRNA. The active-site Proton acceptor is His-19. TRNA-binding residues include Phe-64, Asn-66, and Asn-112.

It belongs to the PTH family. As to quaternary structure, monomer.

It localises to the cytoplasm. It catalyses the reaction an N-acyl-L-alpha-aminoacyl-tRNA + H2O = an N-acyl-L-amino acid + a tRNA + H(+). In terms of biological role, hydrolyzes ribosome-free peptidyl-tRNAs (with 1 or more amino acids incorporated), which drop off the ribosome during protein synthesis, or as a result of ribosome stalling. Functionally, catalyzes the release of premature peptidyl moieties from peptidyl-tRNA molecules trapped in stalled 50S ribosomal subunits, and thus maintains levels of free tRNAs and 50S ribosomes. This chain is Peptidyl-tRNA hydrolase, found in Rhizobium meliloti (strain 1021) (Ensifer meliloti).